The chain runs to 493 residues: Bifunctional protein GlmU (493 aa).

A pyrophosphorylase region spans residues 1-246; that stretch reads MTGELDVDGE…SWLVAGINDR (246 aa). Residues 21 to 24, Lys-35, Gln-88, 93 to 94, 117 to 119, Gly-156, Glu-171, Asn-186, and Asn-244 each bind UDP-N-acetyl-alpha-D-glucosamine; these read LAAG, GT, and SGD. Mg(2+) is bound at residue Asp-119. Asn-244 is a Mg(2+) binding site. The segment at 247 to 267 is linker; sequence VQLTAAATELNARIIRRWQLA. The interval 268–493 is N-acetyltransferase; that stretch reads GVTIHDPRTT…DGPADDASDA (226 aa). Residues Arg-349 and Lys-367 each contribute to the UDP-N-acetyl-alpha-D-glucosamine site. His-379 (proton acceptor) is an active-site residue. UDP-N-acetyl-alpha-D-glucosamine-binding residues include Tyr-382 and Asn-393. Acetyl-CoA is bound by residues Ala-396, 402–403, Ser-421, and Ala-439; that span reads NY. Residues 470–493 form a disordered region; that stretch reads RPGTPEARAAVEAADGPADDASDA.

This sequence in the N-terminal section; belongs to the N-acetylglucosamine-1-phosphate uridyltransferase family. The protein in the C-terminal section; belongs to the transferase hexapeptide repeat family. Homotrimer. Mg(2+) serves as cofactor.

The protein localises to the cytoplasm. It catalyses the reaction alpha-D-glucosamine 1-phosphate + acetyl-CoA = N-acetyl-alpha-D-glucosamine 1-phosphate + CoA + H(+). It carries out the reaction N-acetyl-alpha-D-glucosamine 1-phosphate + UTP + H(+) = UDP-N-acetyl-alpha-D-glucosamine + diphosphate. The protein operates within nucleotide-sugar biosynthesis; UDP-N-acetyl-alpha-D-glucosamine biosynthesis; N-acetyl-alpha-D-glucosamine 1-phosphate from alpha-D-glucosamine 6-phosphate (route II): step 2/2. Its pathway is nucleotide-sugar biosynthesis; UDP-N-acetyl-alpha-D-glucosamine biosynthesis; UDP-N-acetyl-alpha-D-glucosamine from N-acetyl-alpha-D-glucosamine 1-phosphate: step 1/1. It participates in bacterial outer membrane biogenesis; LPS lipid A biosynthesis. Its function is as follows. Catalyzes the last two sequential reactions in the de novo biosynthetic pathway for UDP-N-acetylglucosamine (UDP-GlcNAc). The C-terminal domain catalyzes the transfer of acetyl group from acetyl coenzyme A to glucosamine-1-phosphate (GlcN-1-P) to produce N-acetylglucosamine-1-phosphate (GlcNAc-1-P), which is converted into UDP-GlcNAc by the transfer of uridine 5-monophosphate (from uridine 5-triphosphate), a reaction catalyzed by the N-terminal domain. This chain is Bifunctional protein GlmU, found in Clavibacter sepedonicus (Clavibacter michiganensis subsp. sepedonicus).